The following is a 387-amino-acid chain: Cytochrome b (387 aa).

4 helical membrane-spanning segments follow: residues Phe32–Met52, Trp76–Gly98, Val113–Val133, and Phe179–Ile199. Residues His82 and His96 each coordinate heme b. Residues His183 and His197 each contribute to the heme b site. His202 is a binding site for a ubiquinone. 4 helical membrane passes run Tyr226–Phe246, Leu290–Asp310, Leu322–Ala342, and Phe349–Pro369.

It belongs to the cytochrome b family. As to quaternary structure, fungal cytochrome b-c1 complex contains 10 subunits; 3 respiratory subunits, 2 core proteins and 5 low-molecular weight proteins. Cytochrome b-c1 complex is a homodimer. The cofactor is heme b.

It is found in the mitochondrion inner membrane. Its function is as follows. Component of the ubiquinol-cytochrome c reductase complex (complex III or cytochrome b-c1 complex) that is part of the mitochondrial respiratory chain. The b-c1 complex mediates electron transfer from ubiquinol to cytochrome c. Contributes to the generation of a proton gradient across the mitochondrial membrane that is then used for ATP synthesis. In Podospora anserina (strain S / ATCC MYA-4624 / DSM 980 / FGSC 10383) (Pleurage anserina), this protein is Cytochrome b (COB).